The chain runs to 201 residues: Probable GTP-binding protein EngB (201 aa).

The region spanning 23 to 196 (TGPEIALAGR…HEAVEEILSM (174 aa)) is the EngB-type G domain. GTP-binding positions include 31-38 (GRSNVGKS), 58-62 (GKTQM), 76-79 (DLPG), 143-146 (TKAD), and 175-177 (YSA). The Mg(2+) site is built by serine 38 and threonine 60.

It belongs to the TRAFAC class TrmE-Era-EngA-EngB-Septin-like GTPase superfamily. EngB GTPase family. It depends on Mg(2+) as a cofactor.

Functionally, necessary for normal cell division and for the maintenance of normal septation. In Desulfitobacterium hafniense (strain DSM 10664 / DCB-2), this protein is Probable GTP-binding protein EngB.